We begin with the raw amino-acid sequence, 350 residues long: tRNA uridine(34) hydroxylase (350 aa).

The 95-residue stretch at 146–240 (DDPDAVFIDM…YARRAREQGL (95 aa)) folds into the Rhodanese domain. Cys-200 serves as the catalytic Cysteine persulfide intermediate. Over residues 319–328 (RRRRAGRENG) the composition is skewed to basic and acidic residues. Positions 319–350 (RRRRAGRENGNKIFNKSRGRLNSKLSIPDPAE) are disordered.

The protein belongs to the TrhO family.

It carries out the reaction uridine(34) in tRNA + AH2 + O2 = 5-hydroxyuridine(34) in tRNA + A + H2O. Catalyzes oxygen-dependent 5-hydroxyuridine (ho5U) modification at position 34 in tRNAs. In Salmonella choleraesuis (strain SC-B67), this protein is tRNA uridine(34) hydroxylase.